The primary structure comprises 239 residues: Ribonuclease HII (239 aa).

Residues 18 to 231 form the RNase H type-2 domain; sequence KIIVGLDEAG…SKNLLKEIEE (214 aa). A divalent metal cation is bound by residues Asp-24, Glu-25, and Asp-125.

This sequence belongs to the RNase HII family. Mn(2+) is required as a cofactor. Mg(2+) serves as cofactor.

The protein resides in the cytoplasm. The enzyme catalyses Endonucleolytic cleavage to 5'-phosphomonoester.. Endonuclease that specifically degrades the RNA of RNA-DNA hybrids. This Methanococcus maripaludis (strain C7 / ATCC BAA-1331) protein is Ribonuclease HII.